Reading from the N-terminus, the 142-residue chain is Nucleoside diphosphate kinase (142 aa).

ATP-binding residues include lysine 11, phenylalanine 59, arginine 87, threonine 93, arginine 104, and asparagine 114. Residue histidine 117 is the Pros-phosphohistidine intermediate of the active site.

Belongs to the NDK family. As to quaternary structure, homotetramer. It depends on Mg(2+) as a cofactor.

The protein resides in the cytoplasm. The catalysed reaction is a 2'-deoxyribonucleoside 5'-diphosphate + ATP = a 2'-deoxyribonucleoside 5'-triphosphate + ADP. The enzyme catalyses a ribonucleoside 5'-diphosphate + ATP = a ribonucleoside 5'-triphosphate + ADP. Its function is as follows. Major role in the synthesis of nucleoside triphosphates other than ATP. The ATP gamma phosphate is transferred to the NDP beta phosphate via a ping-pong mechanism, using a phosphorylated active-site intermediate. The sequence is that of Nucleoside diphosphate kinase from Marinobacter nauticus (strain ATCC 700491 / DSM 11845 / VT8) (Marinobacter aquaeolei).